A 161-amino-acid chain; its full sequence is Large-conductance mechanosensitive channel (161 aa).

Transmembrane regions (helical) follow at residues 21–41 (VGVIIGAAFNGIVKSLVDGVI) and 79–99 (GAFINTVIQFLIVAVVVFLLV). Residues 142–154 (TAAPKAAAAPVAK) show a composition bias toward low complexity. The disordered stretch occupies residues 142 to 161 (TAAPKAAAAPVAKPKTKPKA).

It belongs to the MscL family. In terms of assembly, homopentamer.

The protein resides in the cell inner membrane. Its function is as follows. Channel that opens in response to stretch forces in the membrane lipid bilayer. May participate in the regulation of osmotic pressure changes within the cell. In Caulobacter sp. (strain K31), this protein is Large-conductance mechanosensitive channel.